Reading from the N-terminus, the 1222-residue chain is Kinesin-related protein 9 (1222 aa).

Residues 1–25 (MDNNNNNFSTPKQPTINSTTGGQLR) show a composition bias toward polar residues. Disordered stretches follow at residues 1-55 (MDNN…ITNS), 75-165 (MDSL…STNI), and 188-343 (SSNT…TQPL). Over residues 26–55 (SRSNSSPSTSSISTPRNGSTTATTSSITNS) the composition is skewed to low complexity. Over residues 75-85 (MDSLSTPMSQS) the composition is skewed to polar residues. Low complexity-rich tracts occupy residues 122-165 (SFIS…STNI), 194-209 (SSLPSSTNNGNNPLSN), 216-238 (NHHLVNSNSSTSTPSPTMFISTT), and 254-325 (NLTT…RTPI). Residues 326–343 (QNFNSVGGVNITSKTQPL) are compositionally biased toward polar residues. The region spanning 350-719 (SIQAVCRFRP…LNFGQRAQSV (370 aa)) is the Kinesin motor domain. 438–445 (GQTGAGKT) contacts ATP. Residues 724-1026 (LQNVEESHSE…DTLTNKLEIQ (303 aa)) adopt a coiled-coil conformation. The disordered stretch occupies residues 1144-1174 (NINNNNNIKNNNNNNKLKSKKVGSSSSSSSN). The helical transmembrane segment at 1183-1203 (ILFFLIILVILFFLMVAVGLT) threads the bilayer.

It belongs to the TRAFAC class myosin-kinesin ATPase superfamily. Kinesin family.

It localises to the membrane. Its subcellular location is the cytoplasm. The protein localises to the cytoskeleton. Microtubule-associated force-producing protein that plays a role in organelle transport. Its motor activity is directed toward the microtubule's plus end. This is Kinesin-related protein 9 (kif9) from Dictyostelium discoideum (Social amoeba).